The following is a 211-amino-acid chain: 5,6-dimethylbenzimidazole synthase (211 aa).

Residues 22–26, Ser50, Leu99, and Ser158 each bind FMN; that span reads RRDVR.

The protein belongs to the BluB family. Homooctamer.

It catalyses the reaction FMNH2 + O2 = dialurate + 5,6-dimethylbenzimidazole + D-erythrose 4-phosphate + H(+). In terms of biological role, involved in the biosynthesis of cobalamin (vitamin B12). Catalyzes the oxidative fragmentation and contraction of the isoalloxazine heterocycle and the cleavage of the ribityl tail of FMNH(2) to form 5,6-dimethylbenzimidazole (DMB) and D-erythrose 4-phosphate (E4P). NAD(P)H is only required initially to reduce FMN and oxygen drives the oxidative fragmentation. The polypeptide is 5,6-dimethylbenzimidazole synthase (Rhodospirillum rubrum (strain ATCC 11170 / ATH 1.1.1 / DSM 467 / LMG 4362 / NCIMB 8255 / S1)).